The following is a 192-amino-acid chain: UPF0301 protein Bcep18194_A3962 (192 aa).

The protein belongs to the UPF0301 (AlgH) family.

The sequence is that of UPF0301 protein Bcep18194_A3962 from Burkholderia lata (strain ATCC 17760 / DSM 23089 / LMG 22485 / NCIMB 9086 / R18194 / 383).